The chain runs to 339 residues: Holliday junction branch migration complex subunit RuvB (339 aa).

The interval 2–187 (KDVNDEERII…FGIIEHMQYY (186 aa)) is large ATPase domain (RuvB-L). ATP is bound by residues Leu-26, Arg-27, Gly-68, Lys-71, Thr-72, Thr-73, 134–136 (EDF), Arg-177, Tyr-187, and Arg-224. Thr-72 is a binding site for Mg(2+). The tract at residues 188 to 258 (SIDDLEKIIQ…TTKHSLHLLE (71 aa)) is small ATPAse domain (RuvB-S). The tract at residues 261–339 (DEGLDQTDRK…QLGYPPKKAE (79 aa)) is head domain (RuvB-H). Residues Arg-316 and Arg-321 each contribute to the DNA site.

It belongs to the RuvB family. As to quaternary structure, homohexamer. Forms an RuvA(8)-RuvB(12)-Holliday junction (HJ) complex. HJ DNA is sandwiched between 2 RuvA tetramers; dsDNA enters through RuvA and exits via RuvB. An RuvB hexamer assembles on each DNA strand where it exits the tetramer. Each RuvB hexamer is contacted by two RuvA subunits (via domain III) on 2 adjacent RuvB subunits; this complex drives branch migration. In the full resolvosome a probable DNA-RuvA(4)-RuvB(12)-RuvC(2) complex forms which resolves the HJ.

The protein resides in the cytoplasm. The catalysed reaction is ATP + H2O = ADP + phosphate + H(+). In terms of biological role, the RuvA-RuvB-RuvC complex processes Holliday junction (HJ) DNA during genetic recombination and DNA repair, while the RuvA-RuvB complex plays an important role in the rescue of blocked DNA replication forks via replication fork reversal (RFR). RuvA specifically binds to HJ cruciform DNA, conferring on it an open structure. The RuvB hexamer acts as an ATP-dependent pump, pulling dsDNA into and through the RuvAB complex. RuvB forms 2 homohexamers on either side of HJ DNA bound by 1 or 2 RuvA tetramers; 4 subunits per hexamer contact DNA at a time. Coordinated motions by a converter formed by DNA-disengaged RuvB subunits stimulates ATP hydrolysis and nucleotide exchange. Immobilization of the converter enables RuvB to convert the ATP-contained energy into a lever motion, pulling 2 nucleotides of DNA out of the RuvA tetramer per ATP hydrolyzed, thus driving DNA branch migration. The RuvB motors rotate together with the DNA substrate, which together with the progressing nucleotide cycle form the mechanistic basis for DNA recombination by continuous HJ branch migration. Branch migration allows RuvC to scan DNA until it finds its consensus sequence, where it cleaves and resolves cruciform DNA. The chain is Holliday junction branch migration complex subunit RuvB from Lactobacillus gasseri (strain ATCC 33323 / DSM 20243 / BCRC 14619 / CIP 102991 / JCM 1131 / KCTC 3163 / NCIMB 11718 / NCTC 13722 / AM63).